Here is a 241-residue protein sequence, read N- to C-terminus: MITLKNVSKWYGHFQVLTDCSTEVKKGEVVVVCGPSGSGKSTLIKTVNGLEPVQQGEITVDGIVVNDKKTDLAKLRSRVGMVFQHFELFPHLSIIENLTLAQVKVLKRDKAPAREKALKLLERVGLSAHANKFPAQLSGGQQQRVAIARALCMDPIAMLFDEPTSALDPEMINEVLDVMVELANEGMTMMVVTHEMGFARKVANRVIFMDEGKIVEDSPKDAFFDDPKSDRAKDFLAKILH.

Positions 2 to 236 (ITLKNVSKWY…PKSDRAKDFL (235 aa)) constitute an ABC transporter domain. 34 to 41 (GPSGSGKS) is a binding site for ATP.

Belongs to the ABC transporter superfamily. The complex is composed of two ATP-binding proteins (GltL), two transmembrane proteins (GltJ and GltK) and a solute-binding protein (GltI).

Its subcellular location is the cell inner membrane. It carries out the reaction a polar amino acid(out) + ATP + H2O = a polar amino acid(in) + ADP + phosphate + H(+). The enzyme catalyses L-glutamate(out) + ATP + H2O = L-glutamate(in) + ADP + phosphate + H(+). The catalysed reaction is L-aspartate(out) + ATP + H2O = L-aspartate(in) + ADP + phosphate + H(+). Functionally, part of the ABC transporter complex GltIJKL involved in glutamate and aspartate uptake. Probably responsible for energy coupling to the transport system. The chain is Glutamate/aspartate import ATP-binding protein GltL (gltL) from Escherichia coli O157:H7.